Here is a 430-residue protein sequence, read N- to C-terminus: Long-chain specific acyl-CoA dehydrogenase, mitochondrial (430 aa).

The transit peptide at 1-30 (MAARLLRGSLRVLGGHRAPRQLPAARCSHS) directs the protein to the mitochondrion. N6-acetyllysine is present on lysine 42. A Phosphoserine modification is found at serine 54. Lysine 66 and lysine 81 each carry N6-acetyllysine; alternate. N6-succinyllysine; alternate is present on residues lysine 66 and lysine 81. Residues lysine 92 and lysine 95 each carry the N6-acetyllysine modification. N6-succinyllysine is present on lysine 165. FAD is bound by residues 170 to 179 (IAMTEPGAGS) and 203 to 205 (FIS). Serine 179 is a substrate binding site. Residue 227–228 (AH) coordinates substrate. Position 240 is an N6-succinyllysine (lysine 240). 2 positions are modified to N6-acetyllysine; alternate: lysine 254 and lysine 279. 2 positions are modified to N6-succinyllysine; alternate: lysine 254 and lysine 279. Residues tyrosine 282 and 289–292 (PQER) each bind substrate. Glutamate 291 acts as the Proton acceptor in catalysis. Arginine 317 is an FAD binding site. An N6-acetyllysine modification is found at lysine 318. Lysine 322 is modified (N6-acetyllysine; alternate). Lysine 322 bears the N6-succinyllysine; alternate mark. Glutamine 328 contributes to the FAD binding site. Lysine 358 is modified (N6-acetyllysine). At serine 362 the chain carries Phosphoserine. An FAD-binding site is contributed by 385-389 (QLHGG). A substrate-binding site is contributed by 412–413 (GG). Position 414 to 416 (414 to 416 (TNE)) interacts with FAD.

It belongs to the acyl-CoA dehydrogenase family. Homotetramer. Requires FAD as cofactor. Post-translationally, acetylation at Lys-318 and Lys-322 in proximity of the cofactor-binding sites strongly reduces catalytic activity. These sites are deacetylated by SIRT3.

It is found in the mitochondrion matrix. It catalyses the reaction a long-chain 2,3-saturated fatty acyl-CoA + oxidized [electron-transfer flavoprotein] + H(+) = a long-chain (2E)-enoyl-CoA + reduced [electron-transfer flavoprotein]. It carries out the reaction hexanoyl-CoA + oxidized [electron-transfer flavoprotein] + H(+) = (2E)-hexenoyl-CoA + reduced [electron-transfer flavoprotein]. The catalysed reaction is octanoyl-CoA + oxidized [electron-transfer flavoprotein] + H(+) = (2E)-octenoyl-CoA + reduced [electron-transfer flavoprotein]. The enzyme catalyses decanoyl-CoA + oxidized [electron-transfer flavoprotein] + H(+) = (2E)-decenoyl-CoA + reduced [electron-transfer flavoprotein]. It catalyses the reaction dodecanoyl-CoA + oxidized [electron-transfer flavoprotein] + H(+) = (2E)-dodecenoyl-CoA + reduced [electron-transfer flavoprotein]. It carries out the reaction tetradecanoyl-CoA + oxidized [electron-transfer flavoprotein] + H(+) = (2E)-tetradecenoyl-CoA + reduced [electron-transfer flavoprotein]. The catalysed reaction is oxidized [electron-transfer flavoprotein] + hexadecanoyl-CoA + H(+) = (2E)-hexadecenoyl-CoA + reduced [electron-transfer flavoprotein]. The enzyme catalyses octadecanoyl-CoA + oxidized [electron-transfer flavoprotein] + H(+) = (2E)-octadecenoyl-CoA + reduced [electron-transfer flavoprotein]. It catalyses the reaction eicosanoyl-CoA + oxidized [electron-transfer flavoprotein] + H(+) = (2E)-eicosenoyl-CoA + reduced [electron-transfer flavoprotein]. It carries out the reaction docosanoyl-CoA + oxidized [electron-transfer flavoprotein] + H(+) = (2E)-docosenoyl-CoA + reduced [electron-transfer flavoprotein]. The catalysed reaction is tetracosanoyl-CoA + oxidized [electron-transfer flavoprotein] + H(+) = (2E)-tetracosenoyl-CoA + reduced [electron-transfer flavoprotein]. The enzyme catalyses (5E)-tetradecenoyl-CoA + oxidized [electron-transfer flavoprotein] + H(+) = (2E,5E)-tetradecadienoyl-CoA + reduced [electron-transfer flavoprotein]. It catalyses the reaction (5Z)-tetradecenoyl-CoA + oxidized [electron-transfer flavoprotein] + H(+) = (2E,5Z)-tetradecadienoyl-CoA + reduced [electron-transfer flavoprotein]. It carries out the reaction oxidized [electron-transfer flavoprotein] + (9Z)-octadecenoyl-CoA + H(+) = (2E,9Z)-octadecadienoyl-CoA + reduced [electron-transfer flavoprotein]. The protein operates within lipid metabolism; mitochondrial fatty acid beta-oxidation. Its function is as follows. Long-chain specific acyl-CoA dehydrogenase is one of the acyl-CoA dehydrogenases that catalyze the first step of mitochondrial fatty acid beta-oxidation, an aerobic process breaking down fatty acids into acetyl-CoA and allowing the production of energy from fats. The first step of fatty acid beta-oxidation consists in the removal of one hydrogen from C-2 and C-3 of the straight-chain fatty acyl-CoA thioester, resulting in the formation of trans-2-enoyl-CoA. Among the different mitochondrial acyl-CoA dehydrogenases, long-chain specific acyl-CoA dehydrogenase can act on saturated and unsaturated acyl-CoAs with 6 to 24 carbons with a preference for 8 to 18 carbons long primary chains. The chain is Long-chain specific acyl-CoA dehydrogenase, mitochondrial from Homo sapiens (Human).